A 357-amino-acid polypeptide reads, in one-letter code: 4-hydroxyphenylpyruvate dioxygenase (357 aa).

2 consecutive VOC domains span residues 17-137 (GFEF…LVDR) and 165-316 (YIDH…IFTD). Residues His168, His246, and Glu325 each contribute to the Fe cation site.

The protein belongs to the 4HPPD family. Homotetramer. The cofactor is Fe cation.

The enzyme catalyses 3-(4-hydroxyphenyl)pyruvate + O2 = homogentisate + CO2. It participates in amino-acid degradation; L-phenylalanine degradation; acetoacetate and fumarate from L-phenylalanine: step 3/6. This is 4-hydroxyphenylpyruvate dioxygenase (hpd) from Pseudomonas aeruginosa (strain ATCC 15692 / DSM 22644 / CIP 104116 / JCM 14847 / LMG 12228 / 1C / PRS 101 / PAO1).